The sequence spans 265 residues: MSEHRARKRFGQNFLSDPNIIRKIIDAIHPVPGETVVEIGPGLGAMTDPLVERLGHLHVVEIDRDLIARLHERYSPERLTIHEGDALKFDFATLGAPLRVVGNLPYNISTPLLFHLAEFAARVRDMTFMLQKEVVMRMVAEPGTEDYGRLSVMLQYRFRMGRLFDVPPGAFRPAPKVTSSIVRMVPLPAEQRTAKDEALLERVVAAAFGQRRKTLRNTLREWLDEADFPALGIDPGLRGERLTVADYVAITNYIAAKSPRALANA.

Residues Asn-13, Leu-15, Gly-40, Glu-61, Asp-85, and Asn-103 each coordinate S-adenosyl-L-methionine.

Belongs to the class I-like SAM-binding methyltransferase superfamily. rRNA adenine N(6)-methyltransferase family. RsmA subfamily.

It is found in the cytoplasm. It catalyses the reaction adenosine(1518)/adenosine(1519) in 16S rRNA + 4 S-adenosyl-L-methionine = N(6)-dimethyladenosine(1518)/N(6)-dimethyladenosine(1519) in 16S rRNA + 4 S-adenosyl-L-homocysteine + 4 H(+). Functionally, specifically dimethylates two adjacent adenosines (A1518 and A1519) in the loop of a conserved hairpin near the 3'-end of 16S rRNA in the 30S particle. May play a critical role in biogenesis of 30S subunits. In Aromatoleum aromaticum (strain DSM 19018 / LMG 30748 / EbN1) (Azoarcus sp. (strain EbN1)), this protein is Ribosomal RNA small subunit methyltransferase A.